We begin with the raw amino-acid sequence, 375 residues long: Queuine tRNA-ribosyltransferase (375 aa).

The active-site Proton acceptor is aspartate 89. Substrate-binding positions include 89 to 93, aspartate 143, glutamine 187, and glycine 214; that span reads DSGGF. The segment at 245-251 is RNA binding; the sequence is GVGKPED. Aspartate 264 acts as the Nucleophile in catalysis. Positions 269-273 are RNA binding; important for wobble base 34 recognition; sequence TRNAR. Residues cysteine 302, cysteine 304, cysteine 307, and histidine 333 each coordinate Zn(2+).

This sequence belongs to the queuine tRNA-ribosyltransferase family. As to quaternary structure, homodimer. Within each dimer, one monomer is responsible for RNA recognition and catalysis, while the other monomer binds to the replacement base PreQ1. Zn(2+) serves as cofactor.

The catalysed reaction is 7-aminomethyl-7-carbaguanine + guanosine(34) in tRNA = 7-aminomethyl-7-carbaguanosine(34) in tRNA + guanine. It functions in the pathway tRNA modification; tRNA-queuosine biosynthesis. Functionally, catalyzes the base-exchange of a guanine (G) residue with the queuine precursor 7-aminomethyl-7-deazaguanine (PreQ1) at position 34 (anticodon wobble position) in tRNAs with GU(N) anticodons (tRNA-Asp, -Asn, -His and -Tyr). Catalysis occurs through a double-displacement mechanism. The nucleophile active site attacks the C1' of nucleotide 34 to detach the guanine base from the RNA, forming a covalent enzyme-RNA intermediate. The proton acceptor active site deprotonates the incoming PreQ1, allowing a nucleophilic attack on the C1' of the ribose to form the product. After dissociation, two additional enzymatic reactions on the tRNA convert PreQ1 to queuine (Q), resulting in the hypermodified nucleoside queuosine (7-(((4,5-cis-dihydroxy-2-cyclopenten-1-yl)amino)methyl)-7-deazaguanosine). The polypeptide is Queuine tRNA-ribosyltransferase (Aliivibrio salmonicida (strain LFI1238) (Vibrio salmonicida (strain LFI1238))).